Here is a 486-residue protein sequence, read N- to C-terminus: Mitogen-activated protein kinase 17 (486 aa).

Residues 16–307 (YQIQEVVGKG…AEEALADPYF (292 aa)) form the Protein kinase domain. ATP-binding positions include 22-30 (VGKGSYGVV) and lysine 45. Aspartate 142 functions as the Proton acceptor in the catalytic mechanism. Threonine 178 bears the Phosphothreonine mark. Positions 178 to 180 (TDY) match the TXY motif. Tyrosine 180 carries the post-translational modification Phosphotyrosine. Residue threonine 183 is modified to Phosphothreonine. Residues 386 to 455 (EEHNDDEEEH…LSSQKASQVD (70 aa)) form a disordered region. Positions 422–433 (SVHAQSSSASVV) are enriched in low complexity. Positions 440 to 452 (PNTATGLSSQKAS) are enriched in polar residues.

The protein belongs to the protein kinase superfamily. CMGC Ser/Thr protein kinase family. MAP kinase subfamily. In terms of processing, dually phosphorylated on Thr-178 and Tyr-180, which activates the enzyme.

The enzyme catalyses L-seryl-[protein] + ATP = O-phospho-L-seryl-[protein] + ADP + H(+). The catalysed reaction is L-threonyl-[protein] + ATP = O-phospho-L-threonyl-[protein] + ADP + H(+). Its activity is regulated as follows. Activated by threonine and tyrosine phosphorylation. This Arabidopsis thaliana (Mouse-ear cress) protein is Mitogen-activated protein kinase 17 (MPK17).